The sequence spans 480 residues: Glycogen synthase 1 (480 aa).

Lys15 contacts ADP-alpha-D-glucose.

Belongs to the glycosyltransferase 1 family. Bacterial/plant glycogen synthase subfamily.

It catalyses the reaction [(1-&gt;4)-alpha-D-glucosyl](n) + ADP-alpha-D-glucose = [(1-&gt;4)-alpha-D-glucosyl](n+1) + ADP + H(+). The protein operates within glycan biosynthesis; glycogen biosynthesis. Functionally, synthesizes alpha-1,4-glucan chains using ADP-glucose. The sequence is that of Glycogen synthase 1 (glgA1) from Rhizobium radiobacter (Agrobacterium tumefaciens).